The primary structure comprises 45 residues: Large ribosomal subunit protein bL34c (45 aa).

This sequence belongs to the bacterial ribosomal protein bL34 family.

The protein resides in the plastid. It is found in the chloroplast. This is Large ribosomal subunit protein bL34c from Emiliania huxleyi (Coccolithophore).